Consider the following 344-residue polypeptide: UDP-3-O-acylglucosamine N-acyltransferase (344 aa).

His-236 acts as the Proton acceptor in catalysis.

The protein belongs to the transferase hexapeptide repeat family. LpxD subfamily. As to quaternary structure, homotrimer.

The enzyme catalyses a UDP-3-O-[(3R)-3-hydroxyacyl]-alpha-D-glucosamine + a (3R)-hydroxyacyl-[ACP] = a UDP-2-N,3-O-bis[(3R)-3-hydroxyacyl]-alpha-D-glucosamine + holo-[ACP] + H(+). It participates in bacterial outer membrane biogenesis; LPS lipid A biosynthesis. Catalyzes the N-acylation of UDP-3-O-acylglucosamine using 3-hydroxyacyl-ACP as the acyl donor. Is involved in the biosynthesis of lipid A, a phosphorylated glycolipid that anchors the lipopolysaccharide to the outer membrane of the cell. In Nitratidesulfovibrio vulgaris (strain ATCC 29579 / DSM 644 / CCUG 34227 / NCIMB 8303 / VKM B-1760 / Hildenborough) (Desulfovibrio vulgaris), this protein is UDP-3-O-acylglucosamine N-acyltransferase.